Here is a 639-residue protein sequence, read N- to C-terminus: MLTLRERQINAIKQMLNLNSQQPKALAAEPVWKILIYDRVGQDIISPIISIKELRELGVTLHVQLHSDRDSIPDVPAIYFCLPTDENLDRIQQDFSSGLYDVYHLNFLAPITRSKIENLAAAALHAGCVANIHRVYDQYVNFISLEDDFFILKHQQSDQLSYYAINRANTRDEEMEALMDSIVDSLFALFVTLGNVPIIRCPRNSAAEMVARKLEKKLRENLWDARANLFHMDATQAGGGVFSFQRPVLLLLDRNMDLATPLHHTWSYQALVHDVLDLGLNLVYVEDETASAGARKKPKACDLDRNDRFWMTHKGSPFPTVAEAIQEELESYRNSEEEIKRLKTSMGIEGESDIAFSLVNDTTARLTNAVNSLPQLMEKKRLIDMHTKIATAILNFIKARRLDSFFEIEEKVMSKQTLDRPLLDLLRDGEFGQAEDKLRLYIIYFICAQQLPESEQERLKEALQAAGCDLTALAYVQRWKGIMNRSPSISQATQYEGGGTKTVSMFTKLVSQGSSFVMEGVKNLVVKRHNLPVTKITEQVMECRSNAETDDYLYLDPKLLKGGEVLPKNRAPFQDAVVFMVGGGNYIEYQNLVDFIKQKQTSNVQRRIIYGASTLTNARQFLKELSALGGEIQSPTATS.

4 tandem repeats follow at residues 85 to 121, 203 to 245, 423 to 460, and 464 to 500. Positions 85 to 500 are 4 X approximate repeats; it reads DENLDRIQQD…QATQYEGGGT (416 aa).

It belongs to the STXBP/unc-18/SEC1 family. In embryos, from stage 14, expression is seen in posterior midgut, esophagus and salivary glands. No expression is seen in larval imaginal disks.

It is found in the cytoplasm. Its subcellular location is the membrane. Functionally, non-vital for development. This is Protein sly1 homolog (Slh) from Drosophila melanogaster (Fruit fly).